The sequence spans 625 residues: Low affinity potassium transport system protein Kup (625 aa).

12 helical membrane-spanning segments follow: residues 15-35 (TIFS…IYII), 58-78 (IIFW…IVSI), 103-123 (FVIV…IIII), 140-160 (LSFE…LFFI), 171-191 (IFSF…LKGI), 218-238 (FFVF…YINI), 251-271 (LFFV…IILL), 282-302 (FLVP…ISII), 340-360 (IYIP…ISIF), 366-386 (LILI…FFSL), 396-416 (FKIL…FIFI), and 422-442 (IICG…IMIT).

It belongs to the HAK/KUP transporter (TC 2.A.72) family.

The protein resides in the cell membrane. It carries out the reaction K(+)(in) + H(+)(in) = K(+)(out) + H(+)(out). In terms of biological role, responsible for the low-affinity transport of potassium into the cell. Likely operates as a K(+):H(+) symporter. This is Low affinity potassium transport system protein Kup from Wigglesworthia glossinidia brevipalpis.